The sequence spans 136 residues: Histone H3.3C (136 aa).

A compositionally biased stretch (polar residues) spans 1–10 (MALTKQTARK). Positions 1-44 (MALTKQTARKSTGGKAPRKQLATKATRKSAPSTGGVKKPHRYRP) are disordered. The residue at position 4 (T4) is a Phosphothreonine; by HASPIN. K5 carries the allysine; alternate modification. The residue at position 5 (K5) is an N6,N6,N6-trimethyllysine; alternate. K5 carries the N6,N6-dimethyllysine; alternate modification. At K5 the chain carries N6-(2-hydroxyisobutyryl)lysine; alternate. K5 is modified (N6-(beta-hydroxybutyryl)lysine; alternate). Position 5 is an N6-acetyllysine; alternate (K5). N6-methyllysine; alternate is present on K5. Q6 bears the 5-glutamyl dopamine; alternate mark. Q6 is subject to 5-glutamyl serotonin; alternate. Residue T7 is modified to Phosphothreonine; by PKC. Residue R9 is modified to Citrulline; alternate. At R9 the chain carries Symmetric dimethylarginine; by PRMT5; alternate. The residue at position 10 (K10) is an N6,N6,N6-trimethyllysine; alternate. Position 10 is an N6,N6-dimethyllysine; alternate (K10). N6-(2-hydroxyisobutyryl)lysine; alternate is present on K10. At K10 the chain carries N6-(beta-hydroxybutyryl)lysine; alternate. N6-acetyllysine; alternate is present on K10. At K10 the chain carries N6-methyllysine; alternate. The residue at position 10 (K10) is an N6-lactoyllysine; alternate. Residue S11 is modified to ADP-ribosylserine; alternate. The residue at position 11 (S11) is a Phosphoserine; alternate; by AURKB, AURKC, RPS6KA3, RPS6KA4 and RPS6KA5. Residue T12 is modified to Phosphothreonine; by PKC. An N6-(2-hydroxyisobutyryl)lysine; alternate modification is found at K15. Position 15 is an N6-(beta-hydroxybutyryl)lysine; alternate (K15). The residue at position 15 (K15) is an N6-acetyllysine; alternate. The residue at position 15 (K15) is an N6-lactoyllysine; alternate. N6-glutaryllysine; alternate is present on K15. Position 15 is an N6-succinyllysine; alternate (K15). R18 carries the citrulline; alternate modification. An Asymmetric dimethylarginine; by CARM1; alternate modification is found at R18. K19 and K24 each carry N6-(2-hydroxyisobutyryl)lysine; alternate. K19 and K24 each carry N6-(beta-hydroxybutyryl)lysine; alternate. An N6-acetyllysine; alternate mark is found at K19 and K24. Residues K19 and K24 each carry the N6-methyllysine; alternate modification. N6-lactoyllysine; alternate is present on residues K19 and K24. N6-glutaryllysine; alternate is present on residues K19 and K24. An N6-butyryllysine; alternate mark is found at K19 and K24. The residue at position 27 (R27) is a Citrulline. An N6,N6,N6-trimethyllysine; alternate modification is found at K28. N6,N6-dimethyllysine; alternate is present on K28. K28 carries the post-translational modification N6-(2-hydroxyisobutyryl)lysine; alternate. K28 bears the N6-acetyllysine; alternate mark. K28 carries the post-translational modification N6-methyllysine; alternate. K28 carries the N6-lactoyllysine; alternate modification. The residue at position 28 (K28) is an N6-glutaryllysine; alternate. S29 is modified (ADP-ribosylserine; alternate). Phosphoserine; alternate; by AURKB, AURKC and RPS6KA5 is present on S29. Residue S32 is modified to Phosphoserine. Residue K37 is modified to N6,N6,N6-trimethyllysine; alternate. K37 is modified (N6,N6-dimethyllysine; alternate). N6-(2-hydroxyisobutyryl)lysine; alternate is present on K37. K37 carries the N6-acetyllysine; alternate modification. K37 bears the N6-methyllysine; alternate mark. The residue at position 38 (K38) is an N6-methyllysine. Phosphotyrosine is present on Y42. An N6,N6,N6-trimethyllysine; alternate modification is found at K57. K57 carries the N6-(2-hydroxyisobutyryl)lysine; alternate modification. An N6-(beta-hydroxybutyryl)lysine; alternate modification is found at K57. The residue at position 57 (K57) is an N6-acetyllysine; alternate. K57 is modified (N6-lactoyllysine; alternate). K57 bears the N6-glutaryllysine; alternate mark. K57 is modified (N6-succinyllysine; alternate). An N6-methyllysine; by EHMT2; alternate modification is found at K57. S58 carries the post-translational modification Phosphoserine. An N6-(2-hydroxyisobutyryl)lysine; alternate mark is found at K65 and K80. N6-methyllysine; alternate is present on residues K65 and K80. Position 80 is an N6,N6,N6-trimethyllysine; alternate (K80). N6,N6-dimethyllysine; alternate is present on K80. Position 80 is an N6-acetyllysine; alternate (K80). At K80 the chain carries N6-lactoyllysine; alternate. The residue at position 80 (K80) is an N6-glutaryllysine; alternate. K80 is modified (N6-succinyllysine; alternate). Position 81 is a phosphothreonine (T81). Phosphoserine is present on S87. T108 carries the post-translational modification Phosphothreonine. K116 and K123 each carry N6-acetyllysine; alternate. K116 and K123 each carry N6-glutaryllysine; alternate. K123 carries the post-translational modification N6-(2-hydroxyisobutyryl)lysine; alternate. K123 is modified (N6-methyllysine; alternate). K123 is subject to N6-succinyllysine; alternate.

Belongs to the histone H3 family. In terms of assembly, the nucleosome is a histone octamer containing two molecules each of H2A, H2B, H3 and H4 assembled in one H3-H4 heterotetramer and two H2A-H2B heterodimers. The octamer wraps approximately 147 bp of DNA. In terms of processing, acetylation is generally linked to gene activation. Acetylation on Lys-10 (H3K9ac) impairs methylation at Arg-9 (H3R8me2s). Acetylation on Lys-19 (H3K18ac) and Lys-24 (H3K24ac) favors methylation at Arg-18 (H3R17me). Acetylation at Lys-123 (H3K122ac) by EP300/p300 plays a central role in chromatin structure: localizes at the surface of the histone octamer and stimulates transcription, possibly by promoting nucleosome instability. Post-translationally, citrullination at Arg-9 (H3R8ci) and/or Arg-18 (H3R17ci) by PADI4 impairs methylation and represses transcription. Butyrylation of histones marks active promoters and competes with histone acetylation. It is present during late spermatogenesis. In terms of processing, asymmetric dimethylation at Arg-18 (H3R17me2a) by CARM1 is linked to gene activation. Symmetric dimethylation at Arg-9 (H3R8me2s) by PRMT5 is linked to gene repression. Post-translationally, methylation at Lys-5 (H3K4me), Lys-37 and Lys-80 are linked to gene activation. Methylation at Lys-5 (H3K4me) facilitates subsequent acetylation of H3 and H4. Methylation at Lys-80 is associated with DNA double-strand break (DSB) responses and is a specific target for TP53BP1. Methylation at Lys-10 (H3K9me) and Lys-28 (H3K27me) are linked to gene repression. Methylation at Lys-10 (H3K9me) is a specific target for HP1 proteins (CBX1, CBX3 and CBX5) and prevents subsequent phosphorylation at Ser-11 (H3S10ph) and acetylation of H3 and H4. Methylation at Lys-5 (H3K4me) and Lys-80 require preliminary monoubiquitination of H2B at 'Lys-120'. Methylation at Lys-10 (H3K9me) and Lys-28 (H3K27me) are enriched in inactive X chromosome chromatin. Monomethylation at Lys-57 (H3K56me1) by EHMT2/G9A in G1 phase promotes interaction with PCNA and is required for DNA replication. Phosphorylated at Thr-4 (H3T3ph) by HASPIN during prophase and dephosphorylated during anaphase. Phosphorylation at Ser-11 (H3S10ph) by AURKB is crucial for chromosome condensation and cell-cycle progression during mitosis and meiosis. In addition phosphorylation at Ser-11 (H3S10ph) by RPS6KA4 and RPS6KA5 is important during interphase because it enables the transcription of genes following external stimulation, like mitogens, stress, growth factors or UV irradiation and result in the activation of genes, such as c-fos and c-jun. Phosphorylation at Ser-11 (H3S10ph), which is linked to gene activation, prevents methylation at Lys-10 (H3K9me) but facilitates acetylation of H3 and H4. Phosphorylation at Ser-11 (H3S10ph) by AURKB mediates the dissociation of HP1 proteins (CBX1, CBX3 and CBX5) from heterochromatin. Phosphorylation at Ser-11 (H3S10ph) is also an essential regulatory mechanism for neoplastic cell transformation. Phosphorylated at Ser-29 (H3S28ph) by MAP3K20 isoform 1, RPS6KA5 or AURKB during mitosis or upon ultraviolet B irradiation. Phosphorylation at Thr-7 (H3T6ph) by PRKCB is a specific tag for epigenetic transcriptional activation that prevents demethylation of Lys-5 (H3K4me) by LSD1/KDM1A. At centromeres, specifically phosphorylated at Thr-12 (H3T11ph) from prophase to early anaphase, by DAPK3 and PKN1. Phosphorylation at Thr-12 (H3T11ph) by PKN1 or isoform M2 of PKM (PKM2) is a specific tag for epigenetic transcriptional activation that promotes demethylation of Lys-10 (H3K9me) by KDM4C/JMJD2C. Phosphorylation at Tyr-42 (H3Y41ph) by JAK2 promotes exclusion of CBX5 (HP1 alpha) from chromatin. In terms of processing, lysine deamination at Lys-5 (H3K4all) to form allysine is mediated by LOXL2. Allysine formation by LOXL2 only takes place on H3K4me3 and results in gene repression. Post-translationally, succinylation at Lys-80 (H3K79succ) by KAT2A takes place with a maximum frequency around the transcription start sites of genes. It gives a specific tag for epigenetic transcription activation. Desuccinylation at Lys-123 (H3K122succ) by SIRT7 in response to DNA damage promotes chromatin condensation and double-strand breaks (DSBs) repair. Serine ADP-ribosylation constitutes the primary form of ADP-ribosylation of proteins in response to DNA damage. Serine ADP-ribosylation at Ser-11 (H3S10ADPr) is mutually exclusive with phosphorylation at Ser-11 (H3S10ph) and impairs acetylation at Lys-10 (H3K9ac).

The protein resides in the nucleus. It is found in the chromosome. Core component of nucleosome. Nucleosomes wrap and compact DNA into chromatin, limiting DNA accessibility to the cellular machineries which require DNA as a template. Histones thereby play a central role in transcription regulation, DNA repair, DNA replication and chromosomal stability. DNA accessibility is regulated via a complex set of post-translational modifications of histones, also called histone code, and nucleosome remodeling. In Mus musculus (Mouse), this protein is Histone H3.3C.